The following is a 186-amino-acid chain: Casparian strip membrane protein 1 (186 aa).

Residues 1-26 (MKGGSIELGEVSKNASTNKGVKRGLS) are Cytoplasmic-facing. The chain crosses the membrane as a helical span at residues 27-47 (IMDFILRIIAGVATLASAVAM). Over 48-72 (GTTDERLPFATSFVQFRAEYDDLPS) the chain is Extracellular. The helical transmembrane segment at 73 to 93 (FVFFVLANSIVCGYLALSLIL) threads the bilayer. Topologically, residues 94–107 (SILHIVRSTAVKSR) are cytoplasmic. The chain crosses the membrane as a helical span at residues 108 to 128 (ILLIVLDMVMMGLLAAAASAA). Residues 129 to 157 (ASIVYIAHYGNTQANWFPICQQYNSFCER) lie on the Extracellular side of the membrane. The helical transmembrane segment at 158-178 (ISGSLIGSYIAVALFIIIILL) threads the bilayer. The Cytoplasmic portion of the chain corresponds to 179–186 (SQSAISRN).

Belongs to the Casparian strip membrane proteins (CASP) family. Homodimer and heterodimers.

The protein resides in the cell membrane. Functionally, regulates membrane-cell wall junctions and localized cell wall deposition. Required for establishment of the Casparian strip membrane domain (CSD) and the subsequent formation of Casparian strips, a cell wall modification of the root endodermis that determines an apoplastic barrier between the intraorganismal apoplasm and the extraorganismal apoplasm and prevents lateral diffusion. This Medicago truncatula (Barrel medic) protein is Casparian strip membrane protein 1.